Consider the following 20-residue polypeptide: Cytochrome c oxidase subunit 7B-liver, mitochondrial (20 aa).

This sequence belongs to the cytochrome c oxidase VIIb family. As to quaternary structure, component of the cytochrome c oxidase (complex IV, CIV), a multisubunit enzyme composed of 14 subunits. The complex is composed of a catalytic core of 3 subunits MT-CO1, MT-CO2 and MT-CO3, encoded in the mitochondrial DNA, and 11 supernumerary subunits COX4I, COX5A, COX5B, COX6A, COX6B, COX6C, COX7A, COX7B, COX7C, COX8 and NDUFA4, which are encoded in the nuclear genome. The complex exists as a monomer or a dimer and forms supercomplexes (SCs) in the inner mitochondrial membrane with NADH-ubiquinone oxidoreductase (complex I, CI) and ubiquinol-cytochrome c oxidoreductase (cytochrome b-c1 complex, complex III, CIII), resulting in different assemblies (supercomplex SCI(1)III(2)IV(1) and megacomplex MCI(2)III(2)IV(2)).

It localises to the mitochondrion inner membrane. The catalysed reaction is 4 Fe(II)-[cytochrome c] + O2 + 8 H(+)(in) = 4 Fe(III)-[cytochrome c] + 2 H2O + 4 H(+)(out). It functions in the pathway energy metabolism; oxidative phosphorylation. In terms of biological role, component of the cytochrome c oxidase, the last enzyme in the mitochondrial electron transport chain which drives oxidative phosphorylation. The respiratory chain contains 3 multisubunit complexes succinate dehydrogenase (complex II, CII), ubiquinol-cytochrome c oxidoreductase (cytochrome b-c1 complex, complex III, CIII) and cytochrome c oxidase (complex IV, CIV), that cooperate to transfer electrons derived from NADH and succinate to molecular oxygen, creating an electrochemical gradient over the inner membrane that drives transmembrane transport and the ATP synthase. Cytochrome c oxidase is the component of the respiratory chain that catalyzes the reduction of oxygen to water. Electrons originating from reduced cytochrome c in the intermembrane space (IMS) are transferred via the dinuclear copper A center (CU(A)) of subunit 2 and heme A of subunit 1 to the active site in subunit 1, a binuclear center (BNC) formed by heme A3 and copper B (CU(B)). The BNC reduces molecular oxygen to 2 water molecules using 4 electrons from cytochrome c in the IMS and 4 protons from the mitochondrial matrix. The chain is Cytochrome c oxidase subunit 7B-liver, mitochondrial from Thunnus obesus (Bigeye tuna).